Here is a 428-residue protein sequence, read N- to C-terminus: Serine--tRNA ligase (428 aa).

231 to 233 lines the L-serine pocket; it reads TAE. 262 to 264 is a binding site for ATP; that stretch reads RAE. Glu285 is a binding site for L-serine. An ATP-binding site is contributed by 349 to 352; sequence EISS. Ser385 lines the L-serine pocket.

The protein belongs to the class-II aminoacyl-tRNA synthetase family. Type-1 seryl-tRNA synthetase subfamily. As to quaternary structure, homodimer. The tRNA molecule binds across the dimer.

The protein resides in the cytoplasm. The enzyme catalyses tRNA(Ser) + L-serine + ATP = L-seryl-tRNA(Ser) + AMP + diphosphate + H(+). It carries out the reaction tRNA(Sec) + L-serine + ATP = L-seryl-tRNA(Sec) + AMP + diphosphate + H(+). It participates in aminoacyl-tRNA biosynthesis; selenocysteinyl-tRNA(Sec) biosynthesis; L-seryl-tRNA(Sec) from L-serine and tRNA(Sec): step 1/1. Catalyzes the attachment of serine to tRNA(Ser). Is also able to aminoacylate tRNA(Sec) with serine, to form the misacylated tRNA L-seryl-tRNA(Sec), which will be further converted into selenocysteinyl-tRNA(Sec). This chain is Serine--tRNA ligase, found in Methylorubrum extorquens (strain PA1) (Methylobacterium extorquens).